A 476-amino-acid polypeptide reads, in one-letter code: Glutamyl-tRNA(Gln) amidotransferase subunit A (476 aa).

Active-site charge relay system residues include lysine 77 and serine 152. Serine 176 acts as the Acyl-ester intermediate in catalysis.

It belongs to the amidase family. GatA subfamily. In terms of assembly, heterotrimer of A, B and C subunits.

It catalyses the reaction L-glutamyl-tRNA(Gln) + L-glutamine + ATP + H2O = L-glutaminyl-tRNA(Gln) + L-glutamate + ADP + phosphate + H(+). Allows the formation of correctly charged Gln-tRNA(Gln) through the transamidation of misacylated Glu-tRNA(Gln) in organisms which lack glutaminyl-tRNA synthetase. The reaction takes place in the presence of glutamine and ATP through an activated gamma-phospho-Glu-tRNA(Gln). The polypeptide is Glutamyl-tRNA(Gln) amidotransferase subunit A (Acidobacterium capsulatum (strain ATCC 51196 / DSM 11244 / BCRC 80197 / JCM 7670 / NBRC 15755 / NCIMB 13165 / 161)).